We begin with the raw amino-acid sequence, 184 residues long: GTP cyclohydrolase 1 (184 aa).

Zn(2+) contacts are provided by cysteine 75, histidine 78, and cysteine 146.

The protein belongs to the GTP cyclohydrolase I family. As to quaternary structure, toroid-shaped homodecamer, composed of two pentamers of five dimers.

It catalyses the reaction GTP + H2O = 7,8-dihydroneopterin 3'-triphosphate + formate + H(+). It functions in the pathway cofactor biosynthesis; 7,8-dihydroneopterin triphosphate biosynthesis; 7,8-dihydroneopterin triphosphate from GTP: step 1/1. The polypeptide is GTP cyclohydrolase 1 (Streptococcus pneumoniae serotype 2 (strain D39 / NCTC 7466)).